The chain runs to 472 residues: Ribulose bisphosphate carboxylase large chain 1 (472 aa).

Substrate-binding residues include Asn-115 and Thr-165. Residue Lys-167 is the Proton acceptor of the active site. Residue Lys-169 coordinates substrate. Residues Lys-193, Asp-195, and Glu-196 each contribute to the Mg(2+) site. Residue Lys-193 is modified to N6-carboxylysine. His-286 acts as the Proton acceptor in catalysis. Substrate-binding residues include Arg-287, His-319, and Ser-371.

Belongs to the RuBisCO large chain family. Type I subfamily. Heterohexadecamer of 8 large chains and 8 small chains. It depends on Mg(2+) as a cofactor.

It catalyses the reaction 2 (2R)-3-phosphoglycerate + 2 H(+) = D-ribulose 1,5-bisphosphate + CO2 + H2O. The catalysed reaction is D-ribulose 1,5-bisphosphate + O2 = 2-phosphoglycolate + (2R)-3-phosphoglycerate + 2 H(+). Functionally, ruBisCO catalyzes two reactions: the carboxylation of D-ribulose 1,5-bisphosphate, the primary event in carbon dioxide fixation, as well as the oxidative fragmentation of the pentose substrate. Both reactions occur simultaneously and in competition at the same active site. This chain is Ribulose bisphosphate carboxylase large chain 1, found in Hydrogenovibrio marinus.